The chain runs to 92 residues: U21-hexatoxin-Hi1a (92 aa).

A signal peptide spans Met1–Gly19. Cystine bridges form between Cys41–Cys55, Cys48–Cys67, Cys54–Cys82, and Cys85–Cys92.

This sequence belongs to the neurotoxin 21 family. Expressed by the venom gland.

It is found in the secreted. In terms of biological role, potent insecticidal toxin with probable ion channel impairing activity. In vivo, reversibly paralyzes all flies within 30 minutes, even at low dose (0.3 nmol/g). This chain is U21-hexatoxin-Hi1a, found in Hadronyche infensa (Fraser island funnel-web spider).